The primary structure comprises 75 residues: Small ribosomal subunit protein bS16 (75 aa).

This sequence belongs to the bacterial ribosomal protein bS16 family.

In Helicobacter pylori (strain G27), this protein is Small ribosomal subunit protein bS16.